A 423-amino-acid polypeptide reads, in one-letter code: Histone deacetylase 14, chloroplastic (423 aa).

The N-terminal 44 residues, 1 to 44 (MSMALIVRPFFVPGSAGISGSRNICKKNQWRKYLLKPSGSSINC), are a transit peptide targeting the chloroplast. Residues 62-392 (DARLIYSVSA…FRALLGEDSL (331 aa)) form a histone deacetylase region. His202 serves as the catalytic Proton donor/acceptor. Zn(2+) is bound by residues Asp239, His241, and Asp326.

It belongs to the histone deacetylase family. Interacts with PP2A2. It depends on Zn(2+) as a cofactor. As to expression, expressed in stems, leaves, flowers, siliques and mature seeds.

The protein localises to the nucleus. Its subcellular location is the cytoplasm. It localises to the plastid. The protein resides in the chloroplast stroma. It is found in the mitochondrion. The catalysed reaction is N-acetylserotonin + H2O = serotonin + acetate. It carries out the reaction N-acetyltyramine + H2O = tyramine + acetate. The enzyme catalyses N-acetyltryptamine + H2O = tryptamine + acetate. It catalyses the reaction melatonin + H2O = 5-methoxytryptamine + acetate. With respect to regulation, its activity is inhibited by trichostatin A (TSA), a known histone deacetylase inhibitor. In terms of biological role, regulates lysine acetylation levels of plastid proteins related to photosynthesis. Involved in the regulation of the activation state of RuBisCO, which is controlled by lysine acetylation of RuBisCO activase under low-light conditions. Associates with alpha- and beta-tubulins and deacetylate alpha-tubulin. Does not seem to be required for the cellular patterning in the root epidermis. Involved in the regulation of melatonin biosynthesis by catalyzing the deacetylation of N-acetylserotonin to produce serotonin. N-acetylserotonin is methylated by acetylserotonin O-methyltransferase (ASMT) to produce melatonin (N-acetyl-5-methoxytryptamine). Deacetylates melatonin to produce 5-methoxytryptamine. In vitro, deacetylates N-acetyltyramine and N-acetyltryptamine to produce tyramine and tryptamine, respectively. The polypeptide is Histone deacetylase 14, chloroplastic (Arabidopsis thaliana (Mouse-ear cress)).